The following is a 320-amino-acid chain: Acetyl-coenzyme A carboxylase carboxyl transferase subunit alpha (320 aa).

Residues 41–295 (RIEEKAGQAL…GDAIAQAFDE (255 aa)) enclose the CoA carboxyltransferase C-terminal domain.

It belongs to the AccA family. In terms of assembly, acetyl-CoA carboxylase is a heterohexamer composed of biotin carboxyl carrier protein (AccB), biotin carboxylase (AccC) and two subunits each of ACCase subunit alpha (AccA) and ACCase subunit beta (AccD).

The protein resides in the cytoplasm. The catalysed reaction is N(6)-carboxybiotinyl-L-lysyl-[protein] + acetyl-CoA = N(6)-biotinyl-L-lysyl-[protein] + malonyl-CoA. Its pathway is lipid metabolism; malonyl-CoA biosynthesis; malonyl-CoA from acetyl-CoA: step 1/1. In terms of biological role, component of the acetyl coenzyme A carboxylase (ACC) complex. First, biotin carboxylase catalyzes the carboxylation of biotin on its carrier protein (BCCP) and then the CO(2) group is transferred by the carboxyltransferase to acetyl-CoA to form malonyl-CoA. The polypeptide is Acetyl-coenzyme A carboxylase carboxyl transferase subunit alpha (Bradyrhizobium sp. (strain ORS 278)).